The primary structure comprises 283 residues: ATP phosphoribosyltransferase (283 aa).

The protein belongs to the ATP phosphoribosyltransferase family. Long subfamily. Requires Mg(2+) as cofactor.

Its subcellular location is the cytoplasm. The enzyme catalyses 1-(5-phospho-beta-D-ribosyl)-ATP + diphosphate = 5-phospho-alpha-D-ribose 1-diphosphate + ATP. It functions in the pathway amino-acid biosynthesis; L-histidine biosynthesis; L-histidine from 5-phospho-alpha-D-ribose 1-diphosphate: step 1/9. Feedback inhibited by histidine. Catalyzes the condensation of ATP and 5-phosphoribose 1-diphosphate to form N'-(5'-phosphoribosyl)-ATP (PR-ATP). Has a crucial role in the pathway because the rate of histidine biosynthesis seems to be controlled primarily by regulation of HisG enzymatic activity. In Rhodococcus opacus (strain B4), this protein is ATP phosphoribosyltransferase.